The chain runs to 505 residues: tRNA-2-methylthio-N(6)-dimethylallyladenosine synthase (505 aa).

Residues 10–126 (RSYEVRTYGC…LPALLDRARH (117 aa)) enclose the MTTase N-terminal domain. Residues Cys19, Cys55, Cys89, Cys163, Cys167, and Cys170 each coordinate [4Fe-4S] cluster. The region spanning 149–385 (RESAYAGWVS…IALQEQITLE (237 aa)) is the Radical SAM core domain. Positions 388-459 (QKLVGAEVEL…PHHLVADTPV (72 aa)) constitute a TRAM domain.

It belongs to the methylthiotransferase family. MiaB subfamily. In terms of assembly, monomer. It depends on [4Fe-4S] cluster as a cofactor.

The protein resides in the cytoplasm. The enzyme catalyses N(6)-dimethylallyladenosine(37) in tRNA + (sulfur carrier)-SH + AH2 + 2 S-adenosyl-L-methionine = 2-methylsulfanyl-N(6)-dimethylallyladenosine(37) in tRNA + (sulfur carrier)-H + 5'-deoxyadenosine + L-methionine + A + S-adenosyl-L-homocysteine + 2 H(+). Functionally, catalyzes the methylthiolation of N6-(dimethylallyl)adenosine (i(6)A), leading to the formation of 2-methylthio-N6-(dimethylallyl)adenosine (ms(2)i(6)A) at position 37 in tRNAs that read codons beginning with uridine. The protein is tRNA-2-methylthio-N(6)-dimethylallyladenosine synthase of Rhodococcus jostii (strain RHA1).